Consider the following 134-residue polypeptide: Ribonuclease VapC1 (134 aa).

Residues 3-132 (YMLDTNIIIY…RITDLQWQDW (130 aa)) enclose the PINc domain. Residues Asp-6 and Asp-99 each contribute to the Mg(2+) site.

The protein belongs to the PINc/VapC protein family. Mg(2+) serves as cofactor.

Its function is as follows. Toxic component of a type II toxin-antitoxin (TA) system. Acts as an RNase, its toxic effect is neutralized by VapB1 antitoxin. In Haemophilus influenzae (strain ATCC 51907 / DSM 11121 / KW20 / Rd), this protein is Ribonuclease VapC1.